The chain runs to 169 residues: Major pepsin inhibitor 3 (169 aa).

Residues 1–20 form the signal peptide; sequence MHVWLILSLASLWTSSIAYS. Position 21 is a pyrrolidone carboxylic acid (glutamine 21). Disulfide bonds link cysteine 33–cysteine 79, cysteine 68–cysteine 86, and cysteine 99–cysteine 166. The interval 135–169 is disordered; that stretch reads EEQQENQPPSSGMPHGAVPAGGLSPPPPPSFCTVQ. Residues 158–169 are compositionally biased toward pro residues; the sequence is SPPPPPSFCTVQ.

It belongs to the protease inhibitor I33 family. As to expression, body wall.

It is found in the secreted. This is an inhibitor of the aspartic protease pepsin. This Ascaris suum (Pig roundworm) protein is Major pepsin inhibitor 3.